Reading from the N-terminus, the 292-residue chain is MANKTRWIKSRIKSVNETKKITRAMYLISASKMKRSRDRLDSTRPYFEKINEFMKDLVVHGMQTNHILFEGSYKEGQKRLGVIVISGDKGLCGGYNANVIRSTLNLYENLSNKGEVIFFPIGTVGKNFLSRHGYKVEDNFNYQTQSVSVKVAKGIAQNVVKKYYRGDIHELYIIYTKLISTIKQDVVVKKLLPLDPSEFVSGEFKKDETIRYEPSPTNVLDVVIYEYLKGIIFGAMMDSYVSELAARMTAMDNATKSADEMIQKLVLKLNRERQAVITQEISEIISGAAALK.

The protein belongs to the ATPase gamma chain family. In terms of assembly, F-type ATPases have 2 components, CF(1) - the catalytic core - and CF(0) - the membrane proton channel. CF(1) has five subunits: alpha(3), beta(3), gamma(1), delta(1), epsilon(1). CF(0) has three main subunits: a, b and c.

The protein resides in the cell membrane. In terms of biological role, produces ATP from ADP in the presence of a proton gradient across the membrane. The gamma chain is believed to be important in regulating ATPase activity and the flow of protons through the CF(0) complex. The sequence is that of ATP synthase gamma chain from Caldicellulosiruptor saccharolyticus (strain ATCC 43494 / DSM 8903 / Tp8T 6331).